Here is a 406-residue protein sequence, read N- to C-terminus: MAASAPPPPDKLEGGGGPAPPPAPPSTGRKQGKAGLQMKSPEKKRRKSNTQGPAYSHLTEFAPPPTPMVDHLVASNPFEDDFGAPKVGVAAPPFLGSPVPFGGFRVQGGMAGQVPPGYSTGGGGGPQPLRRQPPPFPPNPMGPAFNMPPQGPGYPPPGNMNFPSQPFNQPLGQNFSPPSGQMMPGPVGGFGPMISPTMGQPPRAELGPPSLSQRFAQPGAPFGPSPLQRPGQGLPSLPPNTSPFPGPDPGFPGPGGEDGGKPLNPPASTAFPQEPHSGSPAAAVNGNQPSFPPNSSGRGGGTPDANSLAPPGKAGGGSGPQPPPGLVYPCGACRSEVNDDQDAILCEASCQKWFHRECTGMTESAYGLLTTEASAVWACDLCLKTKEIQSVYIREGMGQLVAANDG.

Disordered stretches follow at residues 1-73 (MAAS…DHLV) and 106-323 (VQGG…PQPP). Position 2 is an N-acetylalanine (Ala-2). Ser-40 is modified (phosphoserine). The Nuclear localization signal motif lies at 41 to 47 (PEKKRRK). Composition is skewed to pro residues over residues 131 to 141 (RQPPPFPPNPM) and 149 to 158 (PQGPGYPPPG). The segment covering 164–179 (SQPFNQPLGQNFSPPS) has biased composition (polar residues). Over residues 236 to 252 (SLPPNTSPFPGPDPGFP) the composition is skewed to pro residues. Over residues 285 to 296 (NGNQPSFPPNSS) the composition is skewed to polar residues. Residue Thr-302 is modified to Phosphothreonine. The PHD-type zinc finger occupies 327–385 (VYPCGACRSEVNDDQDAILCEASCQKWFHRECTGMTESAYGLLTTEASAVWACDLCLKT).

In terms of assembly, binds to BCL9 via the PHD-type zinc finger motif, and thereby becomes part of the nuclear beta-catenin/TCF complex.

Its subcellular location is the nucleus. Involved in signal transduction through the Wnt pathway. The sequence is that of Pygopus homolog 2 (PYGO2) from Homo sapiens (Human).